A 157-amino-acid polypeptide reads, in one-letter code: Ribosome maturation factor RimP (157 aa).

The protein belongs to the RimP family.

It localises to the cytoplasm. Its function is as follows. Required for maturation of 30S ribosomal subunits. The sequence is that of Ribosome maturation factor RimP from Geobacillus kaustophilus (strain HTA426).